We begin with the raw amino-acid sequence, 231 residues long: Protein RhiA (231 aa).

In terms of biological role, may be involved in plant-microbe interaction. The sequence is that of Protein RhiA (rhiA) from Rhizobium leguminosarum bv. viciae.